We begin with the raw amino-acid sequence, 399 residues long: MAPFVEVCRYKPLPLSLSSLCTCPCRSSPRKYLILPQFSEKYPKPLLSHSRFTPISVNRRVITAVARAESNQIGDDANSKEEHNIDQELQNVEEDSSLDDQKQKSRSQFKKRVTFGLGIGLSVGGIVLAGGWVFTVAVAAAVLLSAREYFELVRSKGIAQGMTPPPRYLSRVCSIICALMPILTLYFGHIDISITSAAFVVAMALLLQRGNPRFSQLSSTMFGLFYCGYLPCFWVKLRCGLTAPVLNTGIGRSWPTILGGQAHWTVGLVAILISFCGIIASDTFAFLGGKAFGRTPLISISPKKTWEGAFAGLVGCISITILLSKSLSWPQSLVSTIAFGVLNFFGSVFGDLTESMIKRDAGVKDSGSLIPGHGGILDRVDSYIFTGALAYSFVRLHGV.

A chloroplast-targeting transit peptide spans 1–26; it reads MAPFVEVCRYKPLPLSLSSLCTCPCR. Transmembrane regions (helical) follow at residues 123-143, 187-207, 217-237, 266-286, 309-329, and 333-353; these read VGGI…AAVL, FGHI…ALLL, LSST…WVKL, VGLV…TFAF, AFAG…SLSW, and LVST…GDLT.

It belongs to the CDS family. It depends on Mg(2+) as a cofactor.

Its subcellular location is the plastid. The protein localises to the chloroplast membrane. It catalyses the reaction a 1,2-diacyl-sn-glycero-3-phosphate + CTP + H(+) = a CDP-1,2-diacyl-sn-glycerol + diphosphate. It functions in the pathway phospholipid metabolism; CDP-diacylglycerol biosynthesis; CDP-diacylglycerol from sn-glycerol 3-phosphate: step 3/3. With respect to regulation, highest activities is obtained at about 30 mM CTP and 2 mM phosphatidic acid (PA). Functionally, may be involved in the synthesis of minor phospholipids and in modulation of IP3-mediated signal transduction. Promotes the biosynthesis of plastidial phosphatidylglycerol (PG) which is required for structure and function of thylakoid membranes and, hence, for photoautotrophic growth. The polypeptide is Phosphatidate cytidylyltransferase 5, chloroplastic (Arabidopsis thaliana (Mouse-ear cress)).